A 779-amino-acid chain; its full sequence is ATP-dependent RNA helicase SUPV3L1, mitochondrial (779 aa).

The N-terminal 40 residues, 1-40 (MSLPRCTLLWARLPAGRGAGPRAAPCSALRALVGSFPGAS), are a transit peptide targeting the mitochondrion. Lys-99 is modified (N6-acetyllysine). Residues 194 to 334 (EARARQRKII…AINLVSELLY (141 aa)) form the Helicase ATP-binding domain. 207–214 (GPTNSGKT) provides a ligand contact to ATP. Residues 353-521 (VLDHALESLD…PTAEQIEMFA (169 aa)) enclose the Helicase C-terminal domain. The segment at 650 to 779 (PDSSLVRSLQ…RRKKKDPDSD (130 aa)) is interaction with LAMTOR5, important for protein stability. Residues 693–703 (SGDQSRLSGAS) show a composition bias toward polar residues. Disordered stretches follow at residues 693–732 (SGDQSRLSGASKSPARRTRGTKSAGNKATEPLSPSDKELP) and 754–779 (EWLTQQPEHSREKVGTRRKKKDPDSD). Position 725 is a phosphoserine (Ser-725). Residues 761–779 (EHSREKVGTRRKKKDPDSD) show a composition bias toward basic and acidic residues.

Belongs to the helicase family. In terms of assembly, homodimer; in free form. Component of the mitochondrial degradosome (mtEXO) complex which is a heteropentamer containing 2 copies of SUPV3L1 and 3 copies of PNPT1. As part of mitochondrial degradosome complex, interacts with GRSF1 in a RNA-dependent manner; the interaction enhances the activity of the complex. Interacts with LAMTOR5/HBXIP, WRN and BLM. It depends on Mg(2+) as a cofactor. The cofactor is Mn(2+).

It is found in the nucleus. It localises to the mitochondrion matrix. Its subcellular location is the mitochondrion nucleoid. The catalysed reaction is ATP + H2O = ADP + phosphate + H(+). With respect to regulation, helicase activity toward DNA substrate is inhibited by micromolar concentrations of 5,6-dichloro-1-(beta-D-ribofuranosyl)benzotriazole (DRBT) and 4,5,6,7-tetrabromobenzotriazole (TBBT). Helicase activity toward RNA substrate is inhibited by elevated concentrations of TBBT. Inhibited by some ring-expanded nucleoside analogs. Major helicase player in mitochondrial RNA metabolism. Component of the mitochondrial degradosome (mtEXO) complex, that degrades 3' overhang double-stranded RNA with a 3'-to-5' directionality in an ATP-dependent manner. Involved in the degradation of non-coding mitochondrial transcripts (MT-ncRNA) and tRNA-like molecules. ATPase and ATP-dependent multisubstrate helicase, able to unwind double-stranded (ds) DNA and RNA, and RNA/DNA heteroduplexes in the 5'-to-3' direction. Plays a role in the RNA surveillance system in mitochondria; regulates the stability of mature mRNAs, the removal of aberrantly formed mRNAs and the rapid degradation of non coding processing intermediates. Also implicated in recombination and chromatin maintenance pathways. May protect cells from apoptosis. Associates with mitochondrial DNA. The chain is ATP-dependent RNA helicase SUPV3L1, mitochondrial (Supv3l1) from Mus musculus (Mouse).